The following is a 212-amino-acid chain: Ribosomal RNA large subunit methyltransferase E (212 aa).

Residues 1–26 (MPAERPSVSQKPKNPYKRPDAFTKAA) are disordered. Positions 63, 65, 83, 101, and 122 each coordinate S-adenosyl-L-methionine. Catalysis depends on K162, which acts as the Proton acceptor.

The protein belongs to the class I-like SAM-binding methyltransferase superfamily. RNA methyltransferase RlmE family.

The protein localises to the cytoplasm. It carries out the reaction uridine(2552) in 23S rRNA + S-adenosyl-L-methionine = 2'-O-methyluridine(2552) in 23S rRNA + S-adenosyl-L-homocysteine + H(+). Functionally, specifically methylates the uridine in position 2552 of 23S rRNA at the 2'-O position of the ribose in the fully assembled 50S ribosomal subunit. The polypeptide is Ribosomal RNA large subunit methyltransferase E (Sorangium cellulosum (strain So ce56) (Polyangium cellulosum (strain So ce56))).